A 656-amino-acid polypeptide reads, in one-letter code: Sulfate transporter 1.3 (656 aa).

Residues Met-1–Val-30 form a disordered region. At Met-1–Arg-94 the chain is on the cytoplasmic side. Residues Gly-95 to Ala-115 form a helical membrane-spanning segment. Over Lys-116–Ser-119 the chain is Extracellular. A helical membrane pass occupies residues Leu-120–Gly-140. The Cytoplasmic segment spans residues Ser-141–Asp-144. Residues Ile-145–Ile-165 traverse the membrane as a helical segment. The Extracellular segment spans residues Asp-166–Arg-176. A run of 2 helical transmembrane segments spans residues Leu-177–Leu-197 and Gly-198–Ile-218. Topologically, residues Thr-219–Asn-256 are extracellular. Residues Trp-257–Gly-277 form a helical membrane-spanning segment. At Lys-278 to Leu-283 the chain is on the cytoplasmic side. The helical transmembrane segment at Phe-284–Ile-304 threads the bilayer. The Extracellular portion of the chain corresponds to Thr-305 to Arg-342. A helical membrane pass occupies residues Ile-343–Ala-363. Residues Ala-364–Glu-375 are Cytoplasmic-facing. The helical transmembrane segment at Met-376–Gly-396 threads the bilayer. Over Ser-397–Ala-412 the chain is Extracellular. The helical transmembrane segment at Val-413–Phe-433 threads the bilayer. Topologically, residues Lys-434–Leu-441 are cytoplasmic. The chain crosses the membrane as a helical span at residues Ala-442–Phe-462. Residues Lys-463–Met-473 lie on the Extracellular side of the membrane. Residues Gly-474–Ile-494 form a helical membrane-spanning segment. At Ser-495 to Val-656 the chain is on the cytoplasmic side. An STAS domain is found at Gln-525 to Cys-648.

This sequence belongs to the SLC26A/SulP transporter (TC 2.A.53) family. In terms of tissue distribution, expressed in the phloem of cotyledons, hypocotyls and roots.

The protein resides in the membrane. Its function is as follows. High-affinity H(+)/sulfate cotransporter that mediates the loading of sulfate into the sieve tube. Plays a central role in the regulation of sulfate assimilation. This Arabidopsis thaliana (Mouse-ear cress) protein is Sulfate transporter 1.3 (SULTR1;3).